The sequence spans 477 residues: 3-isopropylmalate dehydratase large subunit (477 aa).

Residues cysteine 347, cysteine 407, and cysteine 410 each coordinate [4Fe-4S] cluster. Residues 418-442 (LAPGERSASTSNRNFEGRQGKGGRT) form a disordered region.

It belongs to the aconitase/IPM isomerase family. LeuC type 1 subfamily. In terms of assembly, heterodimer of LeuC and LeuD. The cofactor is [4Fe-4S] cluster.

The catalysed reaction is (2R,3S)-3-isopropylmalate = (2S)-2-isopropylmalate. The protein operates within amino-acid biosynthesis; L-leucine biosynthesis; L-leucine from 3-methyl-2-oxobutanoate: step 2/4. Functionally, catalyzes the isomerization between 2-isopropylmalate and 3-isopropylmalate, via the formation of 2-isopropylmaleate. The protein is 3-isopropylmalate dehydratase large subunit of Streptomyces avermitilis (strain ATCC 31267 / DSM 46492 / JCM 5070 / NBRC 14893 / NCIMB 12804 / NRRL 8165 / MA-4680).